We begin with the raw amino-acid sequence, 340 residues long: Selenide, water dikinase (340 aa).

Cysteine 13 is a catalytic residue. Residues lysine 16 and 43-45 (ASD) each bind ATP. Residue aspartate 46 coordinates Mg(2+). Residues aspartate 63, aspartate 86, and 133 to 135 (GHS) contribute to the ATP site. Aspartate 86 contributes to the Mg(2+) binding site. Mg(2+) is bound at residue aspartate 221.

The protein belongs to the selenophosphate synthase 1 family. Class I subfamily. Homodimer. It depends on Mg(2+) as a cofactor.

It catalyses the reaction hydrogenselenide + ATP + H2O = selenophosphate + AMP + phosphate + 2 H(+). Its function is as follows. Synthesizes selenophosphate from selenide and ATP. In Desulfitobacterium hafniense (strain Y51), this protein is Selenide, water dikinase.